The sequence spans 624 residues: Phosphomethylpyrimidine synthase (624 aa).

The tract at residues 40–61 is disordered; that stretch reads VPMRKISQSDTPTNTGREKNPP. A compositionally biased stretch (polar residues) spans 45-54; it reads ISQSDTPTNT. Substrate contacts are provided by residues N229, M258, Y287, H323, 343–345, 384–387, and E423; these read SRG and DGLR. H427 lines the Zn(2+) pocket. Y450 contributes to the substrate binding site. H491 is a Zn(2+) binding site. The [4Fe-4S] cluster site is built by C571, C574, and C579.

The protein belongs to the ThiC family. Homodimer. The cofactor is [4Fe-4S] cluster.

The enzyme catalyses 5-amino-1-(5-phospho-beta-D-ribosyl)imidazole + S-adenosyl-L-methionine = 4-amino-2-methyl-5-(phosphooxymethyl)pyrimidine + CO + 5'-deoxyadenosine + formate + L-methionine + 3 H(+). It functions in the pathway cofactor biosynthesis; thiamine diphosphate biosynthesis. Catalyzes the synthesis of the hydroxymethylpyrimidine phosphate (HMP-P) moiety of thiamine from aminoimidazole ribotide (AIR) in a radical S-adenosyl-L-methionine (SAM)-dependent reaction. In Methylococcus capsulatus (strain ATCC 33009 / NCIMB 11132 / Bath), this protein is Phosphomethylpyrimidine synthase.